A 98-amino-acid polypeptide reads, in one-letter code: DNA-binding protein Fis (98 aa).

Residues 74–93 (QTKAANMMGINRGTLRKKLK) constitute a DNA-binding region (H-T-H motif).

It belongs to the transcriptional regulatory Fis family. Homodimer.

Functionally, activates ribosomal RNA transcription. Plays a direct role in upstream activation of rRNA promoters. The sequence is that of DNA-binding protein Fis from Aliivibrio fischeri (strain ATCC 700601 / ES114) (Vibrio fischeri).